The primary structure comprises 254 residues: Large ribosomal subunit protein uL4 (254 aa).

A disordered region spans residues 45–70; it reads PWGNDPEAGKRTSAKGWGSGRGTARV.

The protein belongs to the universal ribosomal protein uL4 family. In terms of assembly, part of the 50S ribosomal subunit.

One of the primary rRNA binding proteins, this protein initially binds near the 5'-end of the 23S rRNA. It is important during the early stages of 50S assembly. It makes multiple contacts with different domains of the 23S rRNA in the assembled 50S subunit and ribosome. Its function is as follows. Forms part of the polypeptide exit tunnel. The sequence is that of Large ribosomal subunit protein uL4 from Methanobrevibacter smithii (strain ATCC 35061 / DSM 861 / OCM 144 / PS).